A 92-amino-acid polypeptide reads, in one-letter code: Large ribosomal subunit protein eL43 (92 aa).

The Zn(2+) site is built by Cys-39, Cys-42, Cys-57, and Cys-60. The C4-type zinc-finger motif lies at 39–60 (CPVCGFPKLKRASTSIWVCGKC).

The protein belongs to the eukaryotic ribosomal protein eL43 family. Putative zinc-binding subfamily. As to quaternary structure, part of the 50S ribosomal subunit. Requires Zn(2+) as cofactor.

In terms of biological role, binds to the 23S rRNA. In Methanocaldococcus jannaschii (strain ATCC 43067 / DSM 2661 / JAL-1 / JCM 10045 / NBRC 100440) (Methanococcus jannaschii), this protein is Large ribosomal subunit protein eL43.